Reading from the N-terminus, the 311-residue chain is Phosphopantothenate--cysteine ligase (311 aa).

N-acetylalanine is present on Ala2.

It belongs to the PPC synthetase family. In terms of assembly, homodimer.

It carries out the reaction (R)-4'-phosphopantothenate + L-cysteine + ATP = N-[(R)-4-phosphopantothenoyl]-L-cysteine + AMP + diphosphate + H(+). The enzyme catalyses (R)-4'-phosphopantothenate + L-cysteine + CTP = N-[(R)-4-phosphopantothenoyl]-L-cysteine + CMP + diphosphate + H(+). The protein operates within cofactor biosynthesis; coenzyme A biosynthesis; CoA from (R)-pantothenate: step 2/5. In terms of biological role, catalyzes the second step in the biosynthesis of coenzyme A from vitamin B5, where cysteine is conjugated to 4'-phosphopantothenate to form 4-phosphopantothenoylcysteine. Has a preference for ATP over CTP as a cosubstrate. The protein is Phosphopantothenate--cysteine ligase (PPCS) of Homo sapiens (Human).